Consider the following 385-residue polypeptide: Trichodiene synthase (385 aa).

This sequence belongs to the trichodiene synthase family.

The enzyme catalyses (2E,6E)-farnesyl diphosphate = trichodiene + diphosphate. It participates in sesquiterpene biosynthesis; trichothecene biosynthesis. Functionally, TS is a member of the terpene cyclase group of enzymes. It catalyzes the isomerization and cyclization of farnesyl pyro-phosphate to form trichodiene, the first cyclic intermediate in the biosynthetic pathway for trichothecenes. It serves to branch trichothecene biosynthesis from the isoprenoid pathway. This chain is Trichodiene synthase (TRI5), found in Paramyrothecium roridum (Myrothecium leaf spot fungus).